The primary structure comprises 901 residues: Bifunctional protein STORR (901 aa).

Residues 12 to 32 (TSSVVALLLALVSILSSVVVL) form a helical membrane-spanning segment. Heme is bound at residue cysteine 513.

It in the N-terminal section; belongs to the cytochrome P450 family. In the C-terminal section; belongs to the aldo/keto reductase family. It depends on heme as a cofactor.

The protein resides in the membrane. The enzyme catalyses (R)-reticuline + NADP(+) = 1,2-dehydroreticuline + NADPH + H(+). The catalysed reaction is (S)-reticuline + reduced [NADPH--hemoprotein reductase] + O2 = 1,2-dehydroreticuline + oxidized [NADPH--hemoprotein reductase] + 2 H2O + H(+). It participates in alkaloid biosynthesis; morphine biosynthesis. Its function is as follows. Bifunctional protein involved in the biosynthesis of morphinan-type benzylisoquinoline alkaloids. Required for the isomerization of (S)- to (R)-reticuline. The cytochrome P450 module is responsible for the conversion of (S)-reticuline to 1,2-dehydroreticuline while the oxidoreductase module converts 1,2-dehydroreticuline to (R)-reticuline. The chain is Bifunctional protein STORR from Papaver somniferum (Opium poppy).